The chain runs to 393 residues: Chalcone synthase DIII (393 aa).

Cys-164 is an active-site residue.

This sequence belongs to the thiolase-like superfamily. Chalcone/stilbene synthases family.

It catalyses the reaction (E)-4-coumaroyl-CoA + 3 malonyl-CoA + 3 H(+) = 2',4,4',6'-tetrahydroxychalcone + 3 CO2 + 4 CoA. The protein operates within secondary metabolite biosynthesis; flavonoid biosynthesis. In terms of biological role, the primary product of this enzyme is 4,2',4',6'-tetrahydroxychalcone (also termed naringenin-chalcone or chalcone) which can under specific conditions spontaneously isomerize into naringenin. This is Chalcone synthase DIII (CHS-DIII) from Ipomoea batatas (Sweet potato).